The following is a 609-amino-acid chain: Proteasome-associated ATPase (609 aa).

Residues 1–25 form a disordered region; the sequence is MADSERSEAFGTPDDTPLSSNDAAE. Residues 19-96 are a coiled coil; that stretch reads SSNDAAELEQ…LREEVDRLGQ (78 aa). 296–301 contributes to the ATP binding site; that stretch reads GCGKTL. A docks into pockets in the proteasome alpha-ring region spans residues 608 to 609; sequence YL.

Belongs to the AAA ATPase family. Homohexamer. Assembles into a hexameric ring structure that caps the 20S proteasome core. Strongly interacts with the prokaryotic ubiquitin-like protein Pup through a hydrophobic interface; the interacting region of ARC lies in its N-terminal coiled-coil domain. There is one Pup binding site per ARC hexamer ring. Upon ATP-binding, the C-terminus of ARC interacts with the alpha-rings of the proteasome core, possibly by binding to the intersubunit pockets.

It participates in protein degradation; proteasomal Pup-dependent pathway. Its function is as follows. ATPase which is responsible for recognizing, binding, unfolding and translocation of pupylated proteins into the bacterial 20S proteasome core particle. May be essential for opening the gate of the 20S proteasome via an interaction with its C-terminus, thereby allowing substrate entry and access to the site of proteolysis. Thus, the C-termini of the proteasomal ATPase may function like a 'key in a lock' to induce gate opening and therefore regulate proteolysis. This Mycobacterium marinum (strain ATCC BAA-535 / M) protein is Proteasome-associated ATPase.